The sequence spans 405 residues: Acetate kinase (405 aa).

Asn13 is a binding site for Mg(2+). Lys20 provides a ligand contact to ATP. Residue Arg94 coordinates substrate. Catalysis depends on Asp153, which acts as the Proton donor/acceptor. Residues His213–Gly217, Asp288–Arg290, and Gly336–Asn340 each bind ATP. Glu390 provides a ligand contact to Mg(2+).

It belongs to the acetokinase family. Homodimer. Requires Mg(2+) as cofactor. It depends on Mn(2+) as a cofactor.

It localises to the cytoplasm. It catalyses the reaction acetate + ATP = acetyl phosphate + ADP. The protein operates within metabolic intermediate biosynthesis; acetyl-CoA biosynthesis; acetyl-CoA from acetate: step 1/2. In terms of biological role, catalyzes the formation of acetyl phosphate from acetate and ATP. Can also catalyze the reverse reaction. The polypeptide is Acetate kinase (Buchnera aphidicola subsp. Acyrthosiphon pisum (strain APS) (Acyrthosiphon pisum symbiotic bacterium)).